A 525-amino-acid polypeptide reads, in one-letter code: PE-PGRS family protein PE_PGRS47 (525 aa).

In terms of domain architecture, PE spans 1–93; the sequence is MSFVIAAPEF…AYSYASAEAA (93 aa). The interval 506 to 525 is disordered; that stretch reads VGGAGGLLEGQNGENGLLPS. Residues 514–525 show a composition bias toward low complexity; that stretch reads EGQNGENGLLPS.

Belongs to the mycobacterial PE family. PGRS subfamily.

The protein localises to the secreted. The protein resides in the cell surface. Its subcellular location is the host cytoplasm. It is found in the host cytosol. In terms of biological role, contributes to evasion of both innate and adaptive immunity. Inhibits autophagy in infected host phagocytes and inhibits major histocompatibility complex (MHC) class II antigen presentation by mycobacteria-infected dendritic cells. Has an important role in the growth and survival of M.tuberculosis, particularly during intracellular growth and in the later chronic phase of infection. The protein is PE-PGRS family protein PE_PGRS47 of Mycobacterium tuberculosis (strain ATCC 25618 / H37Rv).